A 137-amino-acid chain; its full sequence is Endoribonuclease YbeY (137 aa).

The Zn(2+) site is built by H107, H111, and D117.

This sequence belongs to the endoribonuclease YbeY family. It depends on Zn(2+) as a cofactor.

The protein resides in the cytoplasm. In terms of biological role, single strand-specific metallo-endoribonuclease involved in late-stage 70S ribosome quality control and in maturation of the 3' terminus of the 16S rRNA. This Bacteroides thetaiotaomicron (strain ATCC 29148 / DSM 2079 / JCM 5827 / CCUG 10774 / NCTC 10582 / VPI-5482 / E50) protein is Endoribonuclease YbeY.